The primary structure comprises 390 residues: uncharacterized protein (390 aa).

It belongs to the arsA ATPase family.

This is an uncharacterized protein from Streptomyces coelicolor (strain ATCC BAA-471 / A3(2) / M145).